Reading from the N-terminus, the 158-residue chain is Cytochrome b562 (158 aa).

The next 4 helical transmembrane spans lie at 12–32, 46–66, 87–107, and 121–141; these read ITLHWAIAGLVLFNYIFGETM, AGVGHYLHVVVGLAVLVLTLV, VAAGLQGLLYLLTLLVPALGM, and HVLAANAIMLLALVHAVSALF. Residues His-15 and His-53 each coordinate heme b. Residues His-121 and His-135 each coordinate heme b.

Belongs to the cytochrome b561 family. Homodimer. Requires heme b as cofactor.

Its subcellular location is the cell membrane. In terms of biological role, cytochrome b562 is an integral component of the cytochrome b-c1 complex in the cyclic electron transfer system of photosynthetic bacteria. This is Cytochrome b562 from Cereibacter sphaeroides (strain ATCC 17023 / DSM 158 / JCM 6121 / CCUG 31486 / LMG 2827 / NBRC 12203 / NCIMB 8253 / ATH 2.4.1.) (Rhodobacter sphaeroides).